The primary structure comprises 557 residues: Potassium-transporting ATPase potassium-binding subunit (557 aa).

The next 12 membrane-spanning stretches (helical) occupy residues 5 to 25 (GFLL…PLGS), 63 to 83 (LSAI…MLLG), 132 to 152 (GLTV…FALI), 170 to 190 (LLRI…LFFI), 253 to 273 (FVQM…FGEV), 283 to 303 (LLWA…WAEV), 329 to 349 (VLVS…AVIA), 356 to 376 (ALGG…FGGV), 379 to 399 (GLYG…LMIG), 416 to 436 (LTAL…ALAM), 484 to 504 (LLAF…MAIA), and 526 to 546 (LFVG…FIPA).

The protein belongs to the KdpA family. The system is composed of three essential subunits: KdpA, KdpB and KdpC.

It is found in the cell inner membrane. Part of the high-affinity ATP-driven potassium transport (or Kdp) system, which catalyzes the hydrolysis of ATP coupled with the electrogenic transport of potassium into the cytoplasm. This subunit binds the periplasmic potassium ions and delivers the ions to the membrane domain of KdpB through an intramembrane tunnel. The polypeptide is Potassium-transporting ATPase potassium-binding subunit (Escherichia fergusonii (strain ATCC 35469 / DSM 13698 / CCUG 18766 / IAM 14443 / JCM 21226 / LMG 7866 / NBRC 102419 / NCTC 12128 / CDC 0568-73)).